The following is a 247-amino-acid chain: Probable phosphatase Shew_1420 (247 aa).

Positions 8, 10, 16, 41, 74, 102, 132, 193, and 195 each coordinate Zn(2+).

Belongs to the PHP family. The cofactor is Zn(2+).

The polypeptide is Probable phosphatase Shew_1420 (Shewanella loihica (strain ATCC BAA-1088 / PV-4)).